We begin with the raw amino-acid sequence, 64 residues long: Disintegrin VB7A (64 aa).

A Disintegrin domain is found at 1 to 64 (NSGNPCCDPV…SDCPRNPYKD (64 aa)). 4 disulfide bridges follow: C6/C29, C20/C26, C25/C50, and C38/C57. The Cell attachment site signature appears at 42 to 44 (RGD).

It belongs to the disintegrin family. Dimeric disintegrin subfamily. In terms of assembly, heterodimer with VB7B; disulfide-linked. Expressed by the venom gland.

The protein resides in the secreted. In terms of biological role, poor inhibitor of platelet aggregation. The disintegrin inhibits the adhesion of cells expressing the RGD-dependent integrin alpha-5/beta-1 (ITGA5/ITGB1) to immobilized fibronectin. Inhibition on alpha-2b/beta-3 (ITGA2B/ITGB3) is low. This Vipera berus berus (Common viper) protein is Disintegrin VB7A.